The primary structure comprises 202 residues: Dephospho-CoA kinase (202 aa).

Residues 6-202 (KVSITGDLSS…EYFYALKGAL (197 aa)) enclose the DPCK domain. An ATP-binding site is contributed by 14-19 (SSGKTE).

The protein belongs to the CoaE family.

The protein localises to the cytoplasm. It carries out the reaction 3'-dephospho-CoA + ATP = ADP + CoA + H(+). It functions in the pathway cofactor biosynthesis; coenzyme A biosynthesis; CoA from (R)-pantothenate: step 5/5. Catalyzes the phosphorylation of the 3'-hydroxyl group of dephosphocoenzyme A to form coenzyme A. This is Dephospho-CoA kinase from Chlamydia felis (strain Fe/C-56) (Chlamydophila felis).